Here is a 356-residue protein sequence, read N- to C-terminus: Tyrosine recombinase XerS (356 aa).

A Core-binding (CB) domain is found at 16–121 (LMPWYVLEYY…ALSSLYKYLT (106 aa)). Positions 169-354 (GFLTYIDQEH…VSDEQKNALD (186 aa)) constitute a Tyr recombinase domain. Catalysis depends on residues R210, K234, H306, R309, and H332. Y341 functions as the O-(3'-phospho-DNA)-tyrosine intermediate in the catalytic mechanism.

The protein belongs to the 'phage' integrase family. XerS subfamily.

The protein resides in the cytoplasm. With respect to regulation, ftsK is required for recombination. In terms of biological role, site-specific tyrosine recombinase, which acts by catalyzing the cutting and rejoining of the recombining DNA molecules. Essential to convert dimers of the bacterial chromosome into monomers to permit their segregation at cell division. This Streptococcus pneumoniae serotype 4 (strain ATCC BAA-334 / TIGR4) protein is Tyrosine recombinase XerS.